Consider the following 70-residue polypeptide: Spore germination protein-like protein YpzD (70 aa).

The protein belongs to the GerPA/GerPF family.

The chain is Spore germination protein-like protein YpzD (ypzD) from Bacillus subtilis (strain 168).